Consider the following 204-residue polypeptide: Dephospho-CoA kinase (204 aa).

In terms of domain architecture, DPCK spans 5-204; it reads VVGLTGGIGS…YLANLVKAML (200 aa). Position 13-18 (13-18) interacts with ATP; sequence GSGKSA.

It belongs to the CoaE family.

Its subcellular location is the cytoplasm. The catalysed reaction is 3'-dephospho-CoA + ATP = ADP + CoA + H(+). It participates in cofactor biosynthesis; coenzyme A biosynthesis; CoA from (R)-pantothenate: step 5/5. In terms of biological role, catalyzes the phosphorylation of the 3'-hydroxyl group of dephosphocoenzyme A to form coenzyme A. This Chromobacterium violaceum (strain ATCC 12472 / DSM 30191 / JCM 1249 / CCUG 213 / NBRC 12614 / NCIMB 9131 / NCTC 9757 / MK) protein is Dephospho-CoA kinase.